Reading from the N-terminus, the 207-residue chain is GTP cyclohydrolase-2 (207 aa).

49–53 (RTHSE) lines the GTP pocket. Zn(2+)-binding residues include C54, C65, and C67. GTP-binding positions include Q70, 92–94 (EGR), and T114. The active-site Proton acceptor is the D126. R128 serves as the catalytic Nucleophile. Residues T149 and K154 each coordinate GTP.

The protein belongs to the GTP cyclohydrolase II family. The cofactor is Zn(2+).

It carries out the reaction GTP + 4 H2O = 2,5-diamino-6-hydroxy-4-(5-phosphoribosylamino)-pyrimidine + formate + 2 phosphate + 3 H(+). It participates in cofactor biosynthesis; riboflavin biosynthesis; 5-amino-6-(D-ribitylamino)uracil from GTP: step 1/4. Catalyzes the conversion of GTP to 2,5-diamino-6-ribosylamino-4(3H)-pyrimidinone 5'-phosphate (DARP), formate and pyrophosphate. This Hahella chejuensis (strain KCTC 2396) protein is GTP cyclohydrolase-2.